The primary structure comprises 211 residues: Small ribosomal subunit protein uS3 (211 aa).

In terms of domain architecture, KH type-2 spans 16–85 (IDEYFKGKLV…NPQIEVKPLE (70 aa)).

This sequence belongs to the universal ribosomal protein uS3 family. In terms of assembly, part of the 30S ribosomal subunit.

In terms of biological role, binds the lower part of the 30S subunit head. This is Small ribosomal subunit protein uS3 from Methanococcus vannielii (strain ATCC 35089 / DSM 1224 / JCM 13029 / OCM 148 / SB).